The sequence spans 940 residues: Isoleucine--tRNA ligase (940 aa).

Positions 58–68 (PYANGSIHIGH) match the 'HIGH' region motif. Glu564 contributes to the L-isoleucyl-5'-AMP binding site. A 'KMSKS' region motif is present at residues 605–609 (KMSKS). Lys608 is a binding site for ATP. The Zn(2+) site is built by Cys903, Cys906, Cys923, and Cys926.

Belongs to the class-I aminoacyl-tRNA synthetase family. IleS type 1 subfamily. As to quaternary structure, monomer. Requires Zn(2+) as cofactor.

The protein resides in the cytoplasm. It carries out the reaction tRNA(Ile) + L-isoleucine + ATP = L-isoleucyl-tRNA(Ile) + AMP + diphosphate. Its function is as follows. Catalyzes the attachment of isoleucine to tRNA(Ile). As IleRS can inadvertently accommodate and process structurally similar amino acids such as valine, to avoid such errors it has two additional distinct tRNA(Ile)-dependent editing activities. One activity is designated as 'pretransfer' editing and involves the hydrolysis of activated Val-AMP. The other activity is designated 'posttransfer' editing and involves deacylation of mischarged Val-tRNA(Ile). This chain is Isoleucine--tRNA ligase, found in Shewanella baltica (strain OS155 / ATCC BAA-1091).